Consider the following 370-residue polypeptide: MGVMIPFRSILNSLKSYEAGKPIELVVREFGIDPNRIIKLGSNENPFGCAESVMEVVRQAISKMSFYPDDSYLDLKTAIASKFDLTTDRIIPGNGSDQVLDFVCRCVLDQGDSVLINRITFAMYKIYALQCGAKIHSTDSVTHDLNAFLDLAKLIRPKIIFLCTPSNPAGDALSKSDVYEFLSKISLDTLVVIDAAYMEFGKKKDPNKFIPAKEVTDLFPNVFYTGTFSKVYGLGGMRIGYGIGNQELISNLYKMRPPFSVTNLSALAATEALKNESYVESYLENNWNEMKRYEKFAAEQSIEFIDSYANFITFFARKRGKSSSEIAHSLLKQGIILRDLKNYDLNALRITIGRPEQNDLVLEALEKEFH.

Lys-230 bears the N6-(pyridoxal phosphate)lysine mark.

The protein belongs to the class-II pyridoxal-phosphate-dependent aminotransferase family. Histidinol-phosphate aminotransferase subfamily. In terms of assembly, homodimer. Requires pyridoxal 5'-phosphate as cofactor.

The enzyme catalyses L-histidinol phosphate + 2-oxoglutarate = 3-(imidazol-4-yl)-2-oxopropyl phosphate + L-glutamate. Its pathway is amino-acid biosynthesis; L-histidine biosynthesis; L-histidine from 5-phospho-alpha-D-ribose 1-diphosphate: step 7/9. This Leptospira interrogans serogroup Icterohaemorrhagiae serovar Lai (strain 56601) protein is Histidinol-phosphate aminotransferase.